The primary structure comprises 477 residues: Aspartyl/glutamyl-tRNA(Asn/Gln) amidotransferase subunit B (477 aa).

The protein belongs to the GatB/GatE family. GatB subfamily. Heterotrimer of A, B and C subunits.

It carries out the reaction L-glutamyl-tRNA(Gln) + L-glutamine + ATP + H2O = L-glutaminyl-tRNA(Gln) + L-glutamate + ADP + phosphate + H(+). The enzyme catalyses L-aspartyl-tRNA(Asn) + L-glutamine + ATP + H2O = L-asparaginyl-tRNA(Asn) + L-glutamate + ADP + phosphate + 2 H(+). Functionally, allows the formation of correctly charged Asn-tRNA(Asn) or Gln-tRNA(Gln) through the transamidation of misacylated Asp-tRNA(Asn) or Glu-tRNA(Gln) in organisms which lack either or both of asparaginyl-tRNA or glutaminyl-tRNA synthetases. The reaction takes place in the presence of glutamine and ATP through an activated phospho-Asp-tRNA(Asn) or phospho-Glu-tRNA(Gln). In Sulfurovum sp. (strain NBC37-1), this protein is Aspartyl/glutamyl-tRNA(Asn/Gln) amidotransferase subunit B.